Consider the following 362-residue polypeptide: Adenosine kinase (362 aa).

The residue at position 2 (A2) is an N-acetylalanine. A Nuclear localization signal motif is present at residues 8 to 16 (PKPKKLKVE). Residue D35 participates in adenosine binding. A Mg(2+)-binding site is contributed by S49. Residue Y77 is modified to Phosphotyrosine. Positions 147 and 148 each coordinate Mg(2+). Q306 serves as a coordination point for adenosine. The active-site Proton acceptor is D317.

This sequence belongs to the carbohydrate kinase PfkB family. In terms of assembly, monomer. It depends on Mg(2+) as a cofactor. In terms of tissue distribution, widely expressed. Highest level in placenta, liver, muscle and kidney.

The protein resides in the nucleus. Its subcellular location is the cytoplasm. The catalysed reaction is adenosine + ATP = AMP + ADP + H(+). Its pathway is purine metabolism; AMP biosynthesis via salvage pathway; AMP from adenosine: step 1/1. Its activity is regulated as follows. Activity is inhibited by 5-iodotubercidin and 5'-amino-5'-deoxyadenosine. Its function is as follows. Catalyzes the phosphorylation of the purine nucleoside adenosine at the 5' position in an ATP-dependent manner. Serves as a potential regulator of concentrations of extracellular adenosine and intracellular adenine nucleotides. In Homo sapiens (Human), this protein is Adenosine kinase.